Reading from the N-terminus, the 389-residue chain is MGQNLSTSNPLGFFPDHQLDPASRANTANPDWDFNPNKDTWPDANKDGAGAFGLGLTPPHGGLLGWSPQAQGILHTVPANPPPASTNRQTGRQPTPLSPPLRDTHPQAVQWNSTTFHQTLQDPRVRGLYFPAGGSSSGTVNPVPTTASPLSSIFSRIGDPVTNMENITSGFLGPLLVLQAGFFLLTRILTIPQSLDSWWTSLNFRGGTTVCLGQNSQSPTSNHSPTSCPPTCPGYRWMCLRGFIIFLFILLLCLIFLLVLLEYQGMLHVCPLIPGTTTTSTGPCKTCTTPAQGNSMFPSCCCTKTSDGNCTCIPIPSSWAFAKYLWEWASVRFSWLSLLVPFVQWFVGLSPTVWLSAIWMMWYWGPSLYSILSPFLPLLPIFFCLWVYI.

Polar residues-rich tracts occupy residues 1–10 (MGQNLSTSNP) and 85–95 (STNRQTGRQPT). Disordered regions lie at residues 1 to 54 (MGQN…AFGL) and 73 to 106 (ILHTVPANPPPASTNRQTGRQPTPLSPPLRDTHP). Residue glycine 2 is the site of N-myristoyl glycine; by host attachment. The tract at residues 2-108 (GQNLSTSNPL…PPLRDTHPQA (107 aa)) is pre-S1. Positions 2–163 (GQNLSTSNPL…FSRIGDPVTN (162 aa)) are pre-S. Residues 2 to 170 (GQNLSTSNPL…VTNMENITSG (169 aa)) are Virion surface; in external conformation-facing. Residues 2 to 242 (GQNLSTSNPL…PGYRWMCLRG (241 aa)) lie on the Intravirion; in internal conformation side of the membrane. Positions 109–163 (VQWNSTTFHQTLQDPRVRGLYFPAGGSSSGTVNPVPTTASPLSSIFSRIGDPVTN) are pre-S2. Residues 171–191 (FLGPLLVLQAGFFLLTRILTI) traverse the membrane as a helical segment. Over 192–242 (PQSLDSWWTSLNFRGGTTVCLGQNSQSPTSNHSPTSCPPTCPGYRWMCLRG) the chain is Intravirion; in external conformation. A helical membrane pass occupies residues 243-263 (FIIFLFILLLCLIFLLVLLEY). Over 264-337 (QGMLHVCPLI…WASVRFSWLS (74 aa)) the chain is Virion surface. Residue asparagine 309 is glycosylated (N-linked (GlcNAc...) asparagine; by host). The chain crosses the membrane as a helical span at residues 338–358 (LLVPFVQWFVGLSPTVWLSAI). At 359–364 (WMMWYW) the chain is on the intravirion side. The helical transmembrane segment at 365 to 387 (GPSLYSILSPFLPLLPIFFCLWV) threads the bilayer. The Virion surface segment spans residues 388-389 (YI).

This sequence belongs to the orthohepadnavirus major surface antigen family. In terms of assembly, li-HBsAg interacts with capsid protein and with HDV Large delta antigen. Isoform M associates with host chaperone CANX through its pre-S2 N glycan. This association may be essential for M proper secretion. Isoform M is N-terminally acetylated by host at a ratio of 90%, and N-glycosylated by host at the pre-S2 region. Post-translationally, myristoylated.

The protein resides in the virion membrane. In terms of biological role, the large envelope protein exists in two topological conformations, one which is termed 'external' or Le-HBsAg and the other 'internal' or Li-HBsAg. In its external conformation the protein attaches the virus to cell receptors and thereby initiating infection. This interaction determines the species specificity and liver tropism. This attachment induces virion internalization predominantly through caveolin-mediated endocytosis. The large envelope protein also assures fusion between virion membrane and endosomal membrane. In its internal conformation the protein plays a role in virion morphogenesis and mediates the contact with the nucleocapsid like a matrix protein. Functionally, the middle envelope protein plays an important role in the budding of the virion. It is involved in the induction of budding in a nucleocapsid independent way. In this process the majority of envelope proteins bud to form subviral lipoprotein particles of 22 nm of diameter that do not contain a nucleocapsid. This chain is Large envelope protein, found in Homo sapiens (Human).